The chain runs to 469 residues: L-seryl-tRNA(Sec) selenium transferase (469 aa).

N6-(pyridoxal phosphate)lysine is present on K298.

Belongs to the SelA family. The cofactor is pyridoxal 5'-phosphate.

It localises to the cytoplasm. The enzyme catalyses L-seryl-tRNA(Sec) + selenophosphate + H(+) = L-selenocysteinyl-tRNA(Sec) + phosphate. It participates in aminoacyl-tRNA biosynthesis; selenocysteinyl-tRNA(Sec) biosynthesis; selenocysteinyl-tRNA(Sec) from L-seryl-tRNA(Sec) (bacterial route): step 1/1. Converts seryl-tRNA(Sec) to selenocysteinyl-tRNA(Sec) required for selenoprotein biosynthesis. In Nitratidesulfovibrio vulgaris (strain ATCC 29579 / DSM 644 / CCUG 34227 / NCIMB 8303 / VKM B-1760 / Hildenborough) (Desulfovibrio vulgaris), this protein is L-seryl-tRNA(Sec) selenium transferase.